The following is a 461-amino-acid chain: ATP-dependent protease ATPase subunit HslU (461 aa).

Residues valine 21, 63–68, aspartate 274, glutamate 339, and arginine 411 each bind ATP; that span reads GVGKTE.

Belongs to the ClpX chaperone family. HslU subfamily. A double ring-shaped homohexamer of HslV is capped on each side by a ring-shaped HslU homohexamer. The assembly of the HslU/HslV complex is dependent on binding of ATP.

Its subcellular location is the cytoplasm. In terms of biological role, ATPase subunit of a proteasome-like degradation complex; this subunit has chaperone activity. The binding of ATP and its subsequent hydrolysis by HslU are essential for unfolding of protein substrates subsequently hydrolyzed by HslV. HslU recognizes the N-terminal part of its protein substrates and unfolds these before they are guided to HslV for hydrolysis. This Caldanaerobacter subterraneus subsp. tengcongensis (strain DSM 15242 / JCM 11007 / NBRC 100824 / MB4) (Thermoanaerobacter tengcongensis) protein is ATP-dependent protease ATPase subunit HslU.